The following is a 476-amino-acid chain: tRNA sulfurtransferase (476 aa).

In terms of domain architecture, THUMP spans 54 to 156 (AENDIPLSKV…GKDALIYDKI (103 aa)). ATP-binding positions include 174–175 (MV), lysine 256, glycine 278, and glutamine 287. Cysteine 334 and cysteine 433 are disulfide-bonded. The 83-residue stretch at 388–470 (NLEDAVFIDL…LSKQKGSVDE (83 aa)) folds into the Rhodanese domain. The Cysteine persulfide intermediate role is filled by cysteine 433.

The protein belongs to the ThiI family.

It is found in the cytoplasm. The catalysed reaction is [ThiI sulfur-carrier protein]-S-sulfanyl-L-cysteine + a uridine in tRNA + 2 reduced [2Fe-2S]-[ferredoxin] + ATP + H(+) = [ThiI sulfur-carrier protein]-L-cysteine + a 4-thiouridine in tRNA + 2 oxidized [2Fe-2S]-[ferredoxin] + AMP + diphosphate. It carries out the reaction [ThiS sulfur-carrier protein]-C-terminal Gly-Gly-AMP + S-sulfanyl-L-cysteinyl-[cysteine desulfurase] + AH2 = [ThiS sulfur-carrier protein]-C-terminal-Gly-aminoethanethioate + L-cysteinyl-[cysteine desulfurase] + A + AMP + 2 H(+). It participates in cofactor biosynthesis; thiamine diphosphate biosynthesis. Its function is as follows. Catalyzes the ATP-dependent transfer of a sulfur to tRNA to produce 4-thiouridine in position 8 of tRNAs, which functions as a near-UV photosensor. Also catalyzes the transfer of sulfur to the sulfur carrier protein ThiS, forming ThiS-thiocarboxylate. This is a step in the synthesis of thiazole, in the thiamine biosynthesis pathway. The sulfur is donated as persulfide by IscS. This is tRNA sulfurtransferase from Thermoplasma volcanium (strain ATCC 51530 / DSM 4299 / JCM 9571 / NBRC 15438 / GSS1).